We begin with the raw amino-acid sequence, 405 residues long: NADH-quinone oxidoreductase subunit D (405 aa).

The protein belongs to the complex I 49 kDa subunit family. NDH-1 is composed of 14 different subunits. Subunits NuoB, C, D, E, F, and G constitute the peripheral sector of the complex.

It localises to the cell inner membrane. It carries out the reaction a quinone + NADH + 5 H(+)(in) = a quinol + NAD(+) + 4 H(+)(out). In terms of biological role, NDH-1 shuttles electrons from NADH, via FMN and iron-sulfur (Fe-S) centers, to quinones in the respiratory chain. The immediate electron acceptor for the enzyme in this species is believed to be ubiquinone. Couples the redox reaction to proton translocation (for every two electrons transferred, four hydrogen ions are translocated across the cytoplasmic membrane), and thus conserves the redox energy in a proton gradient. This Leptospira borgpetersenii serovar Hardjo-bovis (strain L550) protein is NADH-quinone oxidoreductase subunit D.